Here is a 669-residue protein sequence, read N- to C-terminus: Epithelial sodium channel subunit alpha (669 aa).

Residues methionine 1–alanine 43 are disordered. Over methionine 1–alanine 85 the chain is Cytoplasmic. The span at proline 33–threonine 42 shows a compositional bias: low complexity. Residues phenylalanine 86–phenylalanine 106 form a helical membrane-spanning segment. Topologically, residues glycine 107 to serine 562 are extracellular. Disulfide bonds link cysteine 133–cysteine 305, cysteine 229–cysteine 236, cysteine 282–cysteine 289, cysteine 394–cysteine 479, cysteine 416–cysteine 456, cysteine 416–cysteine 475, cysteine 420–cysteine 471, cysteine 429–cysteine 456, cysteine 429–cysteine 479, and cysteine 431–cysteine 445. The segment at arginine 175–serine 243 is gating release of inhibition by proteolysis (GRIP); protease-sensitive region that is responsible for the proteolytic activation of the channel. A helical transmembrane segment spans residues valine 563–methionine 583. Residues leucine 584–proline 669 are Cytoplasmic-facing. The tract at residues histidine 620–proline 669 is disordered. Residues glycine 630–alanine 643 are compositionally biased toward pro residues. The PY motif; recruits WW domain-containing proteins and is thereby required for ubiquitination and inhibition of the channel by NEDD4 and NEDD4L motif lies at proline 640 to tyrosine 644.

This sequence belongs to the amiloride-sensitive sodium channel (TC 1.A.6) family. SCNN1A subfamily. Heterotrimer; containing an alpha/SCNN1A, a beta/SCNN1B and a gamma/SCNN1G subunit. Interacts with WWP1 (via WW domains). Interacts with WWP2 (via WW domains); inhibits the channel. Interacts with BPIFA1; the interaction is indirect via SCNN1B and inhibits the proteolytic processing of SCNN1A and SCNN1G and the activation of ENaC. Interacts with the full-length immature form of PCSK9 (pro-PCSK9); inhibits ENaC by promoting its proteasomal degradation. In terms of processing, ubiquitinated. Can be ubiquitinated at multiple sites and undergo monoubiquitination and polyubiquitination. Ubiquitination by NEDD4 or NEDD4L inhibits the ENaC channel through endocytosis, intracellular retention and degradation of its individual subunits. ENaC is activated through the proteolytic maturation of its subunits. Furin cleaves the SCNN1A subunit, which results in a stepwise increase in the open probability of the channel due to the release of an inhibitory tract. BPIFA1, which is recruited by the SCNN1B subunit, prevents the proteolytic activation of ENaC. Post-translationally, N-glycosylated. As to expression, expressed in the female reproductive tract, from the fimbrial end of the fallopian tube to the endometrium (at protein level). Expressed in kidney (at protein level). In the respiratory tract, expressed in the bronchial epithelium (at protein level). Highly expressed in lung. Detected at intermediate levels in pancreas and liver, and at low levels in heart and placenta. in skin, expressed in keratinocytes, melanocytes and Merkel cells of the epidermal sub-layers, stratum basale, stratum spinosum and stratum granulosum (at protein level). Expressed in the outer root sheath of the hair follicles (at protein level). Detected in both peripheral and central cells of the sebaceous gland (at protein level). Expressed by eccrine sweat glands (at protein level). In skin, also expressed by arrector pili muscle cells and intradermal adipocytes. Isoform 1 and isoform 2 predominate in all tissues. In terms of tissue distribution, detected in lung and heart.

It localises to the apical cell membrane. Its subcellular location is the cell projection. The protein resides in the cilium. It is found in the cytoplasmic granule. The protein localises to the cytoplasm. It localises to the cytoplasmic vesicle. Its subcellular location is the secretory vesicle. The protein resides in the acrosome. It is found in the flagellum. The catalysed reaction is Na(+)(in) = Na(+)(out). With respect to regulation, originally identified and characterized by its inhibition by the diuretic drug amiloride. Inhibited by phenamil. Its function is as follows. This is one of the three pore-forming subunits of the heterotrimeric epithelial sodium channel (ENaC), a critical regulator of sodium balance and fluid homeostasis. ENaC operates in epithelial tissues, where it mediates the electrodiffusion of sodium ions from extracellular fluid through the apical membrane of cells, with water following osmotically. It plays a key role in maintaining sodium homeostasis through electrogenic sodium reabsorption in the kidneys. Additionally, ENaC is essential for airway surface liquid homeostasis, which is crucial for proper mucus clearance. Functionally, not functional. The chain is Epithelial sodium channel subunit alpha from Homo sapiens (Human).